Reading from the N-terminus, the 112-residue chain is Ig kappa chain V-II region 2S1.3 (112 aa).

The segment at 1 to 23 is framework-1; it reads DIVMTQAAFSNPVTLGTSASFSC. The cysteines at positions 23 and 93 are disulfide-linked. Positions 24–39 are complementarity-determining-1; that stretch reads RSSKSLQQSKGITYLY. A framework-2 region spans residues 40–54; that stretch reads WYLQKPGQSPQLLIY. The segment at 55–61 is complementarity-determining-2; it reads QMSNLAS. Positions 62 to 93 are framework-3; the sequence is GVPDRFSGSGSGTDFTLRISRVEAEDVGVYYC. The tract at residues 94-102 is complementarity-determining-3; sequence ANLQELPYT. The framework-4 stretch occupies residues 103–112; that stretch reads FGGGTKLEIK.

This chain is Ig kappa chain V-II region 2S1.3, found in Mus musculus (Mouse).